Reading from the N-terminus, the 241-residue chain is NAD(P)H-hydrate epimerase (241 aa).

The YjeF N-terminal domain maps to 11-221; that stretch reads AASLDKDLME…SIVEKYGLNC (211 aa). 65–69 lines the (6S)-NADPHX pocket; it reads NNGGD. Residues Asn66 and Asp127 each contribute to the K(+) site. (6S)-NADPHX is bound by residues 131–137 and Asp160; that span reads GFSFGGP. K(+) is bound at residue Ser163.

The protein belongs to the NnrE/AIBP family. Requires K(+) as cofactor.

Its subcellular location is the cytoplasm. It localises to the mitochondrion. The catalysed reaction is (6R)-NADHX = (6S)-NADHX. The enzyme catalyses (6R)-NADPHX = (6S)-NADPHX. Functionally, catalyzes the epimerization of the S- and R-forms of NAD(P)HX, a damaged form of NAD(P)H that is a result of enzymatic or heat-dependent hydration. This is a prerequisite for the S-specific NAD(P)H-hydrate dehydratase to allow the repair of both epimers of NAD(P)HX. The chain is NAD(P)H-hydrate epimerase from Aspergillus fumigatus (strain ATCC MYA-4609 / CBS 101355 / FGSC A1100 / Af293) (Neosartorya fumigata).